Here is an 80-residue protein sequence, read N- to C-terminus: Mitotic-spindle organizing protein 1 (80 aa).

The protein belongs to the MOZART1 family. In terms of assembly, part of the gamma-tubulin complex.

Its subcellular location is the cytoplasm. The protein resides in the cytoskeleton. It localises to the microtubule organizing center. The protein localises to the spindle pole body. Its function is as follows. Required for gamma-tubulin complex recruitment to the microtubule organizing center (MTOC). This chain is Mitotic-spindle organizing protein 1, found in Pyricularia oryzae (strain 70-15 / ATCC MYA-4617 / FGSC 8958) (Rice blast fungus).